The following is a 347-amino-acid chain: MRIDFIRQRLRAQGAKPCHEQRILRIWAQVLPTEGGRSRPDDFLPQAVRDAMPALLADLDGLARLRSQHPGEDGSARLLVELADGQTVESVLLPRDGLCVSTQVGCAVGCVFCMTGREGLLRQVGSAEIVAQVVLARRQRLVKKVVFMGMGEPAHNLDNVMEAIDFLGTTGAIGHKNLVFSTVGDPRVFERLPLGPVKPALALSLHTTRADLRAQLLPRAPRMDPADLVERAEAYARATSYPIQYQWTLLEGINDGPDEVEGIVRLLHGKYAVLNMIPYNTVPDLPYTRPSWEAAAALARTLHRRGILTKLRQSAGQDVEGGCGQLRARELAPSARRIEIRPVASLP.

E89 serves as the catalytic Proton acceptor. The Radical SAM core domain occupies 92 to 318 (LLPRDGLCVS…TKLRQSAGQD (227 aa)). C99 and C323 are disulfide-bonded. [4Fe-4S] cluster is bound by residues C106, C110, and C113. S-adenosyl-L-methionine is bound by residues 151-152 (GE), S181, 204-206 (SLH), and N280. C323 acts as the S-methylcysteine intermediate in catalysis.

Belongs to the radical SAM superfamily. RlmN family. The cofactor is [4Fe-4S] cluster.

The protein resides in the cytoplasm. In Leptothrix cholodnii (strain ATCC 51168 / LMG 8142 / SP-6) (Leptothrix discophora (strain SP-6)), this protein is Probable RNA methyltransferase Lcho_2507.